The primary structure comprises 1627 residues: Pleckstrin homology domain-containing family G member 4B (1627 aa).

6 disordered regions span residues 211–349 (YSSC…VQPR), 381–475 (LTGA…GQAV), 501–537 (VSTD…GTGD), 959–1008 (SEAA…PAQP), 1049–1111 (TTAH…SKGL), and 1124–1159 (PLWQ…QVGS). The span at 241-251 (GSASCPDTLTS) shows a compositional bias: polar residues. 2 stretches are compositionally biased toward basic and acidic residues: residues 262–273 (QLRHLPYPERAE) and 310–322 (ERPD…DRPK). A compositionally biased stretch (gly residues) spans 465 to 474 (RPGGHLGGQA). Residues 975–985 (PKHERAQEAMR) show a composition bias toward basic and acidic residues. Polar residues predominate over residues 1057–1068 (SACSSEPTQTLA). Basic residues predominate over residues 1070–1081 (RPRKHPQKKMIK). 2 stretches are compositionally biased toward polar residues: residues 1101 to 1111 (PDHTSVFSKGL) and 1133 to 1144 (PVTQSRSLSSPS). The DH domain occupies 1161 to 1340 (RLRHIMAEMI…CFQLRHGNDL (180 aa)). Residues 1352–1460 (NLKEQGQLRC…WTDVIGRILW (109 aa)) enclose the PH domain. Positions 1519-1558 (KGTESQMRGSTAVSSSDHAAPFKRPHSTISDSSTSSSSSQ) are disordered. A compositionally biased stretch (polar residues) spans 1521–1535 (TESQMRGSTAVSSSD). A compositionally biased stretch (low complexity) spans 1545 to 1558 (STISDSSTSSSSSQ).

As to quaternary structure, found in a complex with ARHGEF11 and ARHGEF12; binding to ARHGEF11 and ARHGEF12 enhances CDC42 GEF activity of PLEKHG4B, and PLEKHG4B, in turn, inhibits ARHGEF11- and ARHGEF12-mediated RHOA activation. Interacts with ANXA2; this interaction is required for PLEKHG4B localization to cell-cell adhesions.

Its subcellular location is the basal cell membrane. It is found in the cell junction. The protein resides in the nucleus. It localises to the cytoplasm. Its function is as follows. Guanine nucleotide exchange factor (GEF) which specifically activates small GTPase CDC42 by exchanging bound GDP for free GTP. Plays a role in actin cytoskeletal remodeling in the late stage of cell-cell junction formation by regulating the contractility of actin filaments, which prompts the conversion from 'open' to 'closed' junctions. In Homo sapiens (Human), this protein is Pleckstrin homology domain-containing family G member 4B.